Reading from the N-terminus, the 579-residue chain is Maintenance of mitochondrial morphology protein 1 (579 aa).

The Lumenal segment spans residues 1-43 (MQQPQQQDLQIGLPYAPVQPPIPSPAAYFAYLPSPSRWTFTQG). A helical membrane pass occupies residues 44–64 (LIVGQVSMVIVALLLIRYVIF). Topologically, residues 65–579 (EDSATALEKE…GLRNRPGFVQ (515 aa)) are cytoplasmic. In terms of domain architecture, SMP-LTD spans 150–391 (LPESADWLNV…WPRYWSLTLP (242 aa)). Disordered stretches follow at residues 309-332 (VLPTANPNPSSSSSSSATPPRSRH), 460-479 (RPSLASSRPPHVRSSSSGLR), and 558-579 (SSVLPTGAHHSSGLRNRPGFVQ). Low complexity-rich tracts occupy residues 311–328 (PTANPNPSSSSSSSATPP) and 465–476 (SSRPPHVRSSSS).

This sequence belongs to the MMM1 family. In terms of assembly, homodimer. Component of the ER-mitochondria encounter structure (ERMES) or MDM complex, composed of MMM1, MDM10, MDM12 and MDM34. An MMM1 homodimer associates with one molecule of MDM12 on each side in a pairwise head-to-tail manner, and the SMP-LTD domains of MMM1 and MDM12 generate a continuous hydrophobic tunnel for phospholipid trafficking.

Its subcellular location is the endoplasmic reticulum membrane. In terms of biological role, component of the ERMES/MDM complex, which serves as a molecular tether to connect the endoplasmic reticulum (ER) and mitochondria. Components of this complex are involved in the control of mitochondrial shape and protein biogenesis, and function in nonvesicular lipid trafficking between the ER and mitochondria. The MDM12-MMM1 subcomplex functions in the major beta-barrel assembly pathway that is responsible for biogenesis of all outer membrane beta-barrel proteins, and acts in a late step after the SAM complex. The MDM10-MDM12-MMM1 subcomplex further acts in the TOM40-specific pathway after the action of the MDM12-MMM1 complex. Essential for establishing and maintaining the structure of mitochondria and maintenance of mtDNA nucleoids. This Mycosarcoma maydis (Corn smut fungus) protein is Maintenance of mitochondrial morphology protein 1.